The sequence spans 495 residues: Trimethylamine methyltransferase MttB2 (495 aa).

Pyl-334 is a non-standard amino acid (pyrrolysine).

Belongs to the trimethylamine methyltransferase family. In terms of assembly, can form a complex with MttC.

It carries out the reaction Co(I)-[trimethylamine-specific corrinoid protein] + trimethylamine + H(+) = methyl-Co(III)-[trimethylamine-specific corrinoid protein] + dimethylamine. It participates in one-carbon metabolism; methanogenesis from trimethylamine. Functionally, catalyzes the transfer of a methyl group from trimethylamine to the corrinoid cofactor of MttC. The polypeptide is Trimethylamine methyltransferase MttB2 (mttB2) (Methanosarcina mazei (strain ATCC BAA-159 / DSM 3647 / Goe1 / Go1 / JCM 11833 / OCM 88) (Methanosarcina frisia)).